The following is a 148-amino-acid chain: Probable histone H2B.2 (148 aa).

Residues 1–32 (MAPKGEKKPAEKKPAEEKKSTVAEKAPAEKKP) are compositionally biased toward basic and acidic residues. Residues 1-57 (MAPKGEKKPAEKKPAEEKKSTVAEKAPAEKKPKAGKKLPKEGGSAAGEKKKKRSKKS) are disordered. 3 positions are modified to N6-acetyllysine: Lys7, Lys36, and Lys37. Lys144 is covalently cross-linked (Glycyl lysine isopeptide (Lys-Gly) (interchain with G-Cter in ubiquitin)).

It belongs to the histone H2B family. As to quaternary structure, the nucleosome is a histone octamer containing two molecules each of H2A, H2B, H3 and H4 assembled in one H3-H4 heterotetramer and two H2A-H2B heterodimers. The octamer wraps approximately 147 bp of DNA. Can be acetylated to form H2BK6ac, H2BK33ac and H2BK34ac. In terms of processing, monoubiquitinated to form H2BK143ub1; may give a specific tag for epigenetic transcriptional activation.

It localises to the nucleus. The protein localises to the chromosome. Core component of nucleosome. Nucleosomes wrap and compact DNA into chromatin, limiting DNA accessibility to the cellular machineries which require DNA as a template. Histones thereby play a central role in transcription regulation, DNA repair, DNA replication and chromosomal stability. DNA accessibility is regulated via a complex set of post-translational modifications of histones, also called histone code, and nucleosome remodeling. The protein is Probable histone H2B.2 of Medicago truncatula (Barrel medic).